Here is a 122-residue protein sequence, read N- to C-terminus: Proline-rich protein 15 (122 aa).

The disordered stretch occupies residues 1–122 (MADSGGSSPW…FPDDPQEDKQ (122 aa)). Ser-39 carries the phosphoserine modification. A compositionally biased stretch (polar residues) spans 46–56 (TSSLPENQHSN). The segment covering 63–76 (ESLRSDKLCEEKTG) has biased composition (basic and acidic residues). Positions 80–97 (RNLKISRSGRFKEKRKMR) are enriched in basic residues. A compositionally biased stretch (acidic residues) spans 110-122 (EADFPDDPQEDKQ).

Belongs to the PRR15 family. In terms of tissue distribution, exhibits a cell type specific expression pattern only in the small and large intestine and in the testis. Along the intestinal tract expression is restricted to the non-proliferating epithelial cells surrounding the villi and no expression is found in the intestinal crypts, where proliferation occurs. In the testis, it is detected only in post-mitotic secondary spermatocytes.

May have a role in proliferation and/or differentiation. The chain is Proline-rich protein 15 (Prr15) from Mus musculus (Mouse).